Here is a 277-residue protein sequence, read N- to C-terminus: Large ribosomal subunit protein uL2cz/uL2cy (277 aa).

Disordered stretches follow at residues 1–31 and 227–277; these read MAIHLYKTSTPSTRNGAVDSQAKSNTRNTRK and NPVD…RRSK.

It belongs to the universal ribosomal protein uL2 family. As to quaternary structure, part of the 50S ribosomal subunit.

It is found in the plastid. Its subcellular location is the chloroplast. The chain is Large ribosomal subunit protein uL2cz/uL2cy (rpl2-A) from Manihot esculenta (Cassava).